Reading from the N-terminus, the 108-residue chain is Translation initiation factor 1A (108 aa).

The region spanning 10 to 84 is the S1-like domain; it reads IRVITPNKKS…EKGDIIYRYT (75 aa).

Belongs to the eIF-1A family.

In terms of biological role, seems to be required for maximal rate of protein biosynthesis. Enhances ribosome dissociation into subunits and stabilizes the binding of the initiator Met-tRNA(I) to 40 S ribosomal subunits. The chain is Translation initiation factor 1A from Picrophilus torridus (strain ATCC 700027 / DSM 9790 / JCM 10055 / NBRC 100828 / KAW 2/3).